Consider the following 130-residue polypeptide: kinetoplast-associated protein 2-1 (130 aa).

A propeptide spanning residues 1–10 (MLRRTVSNFA) is cleaved from the precursor. Positions 89 to 130 (LTKKWNETKQAQREKAQKAQKKTKSAKSKVKKAAKKSKKSKK) are disordered. Over residues 92–105 (KWNETKQAQREKAQ) the composition is skewed to basic and acidic residues. Positions 106–130 (KAQKKTKSAKSKVKKAAKKSKKSKK) are enriched in basic residues.

The protein belongs to the KAP family. Associates with the kinetoplast DNA network.

The protein localises to the mitochondrion matrix. The protein resides in the kinetoplast. Histone H1-like DNA-binding protein involved in the organization and segregation of kinetoplast DNA (kDNA). The mitochondrial DNA of kinetoplastid protozoa consists of about 5,000 minicircles and 20 to 30 maxicircles. These circular DNAs are held together by catenation into a highly organized compact disk structure referred to as a kinetoplast DNA (kDNA) network. Binds preferentially to a specific fragment of minicircle DNA and is able to compact kDNA networks through DNA charge neutralization and condensation. This Crithidia fasciculata protein is kinetoplast-associated protein 2-1 (KAP2-1).